The sequence spans 379 residues: Succinyl-diaminopimelate desuccinylase (379 aa).

Position 70 (histidine 70) interacts with Zn(2+). Residue aspartate 72 is part of the active site. Aspartate 103 is a binding site for Zn(2+). Catalysis depends on glutamate 137, which acts as the Proton acceptor. Zn(2+)-binding residues include glutamate 138, glutamate 166, and histidine 352.

The protein belongs to the peptidase M20A family. DapE subfamily. As to quaternary structure, homodimer. Zn(2+) is required as a cofactor. It depends on Co(2+) as a cofactor.

It carries out the reaction N-succinyl-(2S,6S)-2,6-diaminopimelate + H2O = (2S,6S)-2,6-diaminopimelate + succinate. It participates in amino-acid biosynthesis; L-lysine biosynthesis via DAP pathway; LL-2,6-diaminopimelate from (S)-tetrahydrodipicolinate (succinylase route): step 3/3. Its function is as follows. Catalyzes the hydrolysis of N-succinyl-L,L-diaminopimelic acid (SDAP), forming succinate and LL-2,6-diaminopimelate (DAP), an intermediate involved in the bacterial biosynthesis of lysine and meso-diaminopimelic acid, an essential component of bacterial cell walls. This is Succinyl-diaminopimelate desuccinylase from Burkholderia lata (strain ATCC 17760 / DSM 23089 / LMG 22485 / NCIMB 9086 / R18194 / 383).